A 574-amino-acid chain; its full sequence is MSFCVNPNCPHPKNPNNVQVCQACGNSLRLNGRYQTLGLLGKGGFGATFAAADVALPGTPICVVKQLRPQTDDPNVFRMAKELFEREAQTLGRVGNHPQVPRLLDYFEDDHQFYLVQEYVKGHNLHQEVKKNGTFTEGSVKQFLTEILPILDYIHSQKVIHRDIKPANLIRRQTDQKLVLIDFGAVKNQIDSVLSSNTSAQTALTAFAVGTAGFAPPEQMAMRPVYASDIYATGVTCLYLLTGKTPKEIDCNSQTGEMDWEKHVTVSSKFAEVIRKMLELSVRHRYKSAQQVLDALEMPTYEDGMMQGMVSTPFTTLTGAGDEPATGIRMGNSSSPDYGDPSTRFNTNVQPRDPSSTSLNTGIKTRTAKPRQSPRDRATSNIESPTTRVRPASNMADGGSVGAGGIDYNMVNPKPFSRREEEKQAIANQPETKRWNGKTFLAEYAQGKRDFADQNLVGIVLAKAFVPGINCYQANLTNANFEQAELTRADFGKARLKNVIFKGANLSDAYFGYADLRGADLRGANLNGVNFKYANLQGANFSGADLGSAKVSPEQLKLAKTNWRTVMPGSGRRR.

The region spanning 34–301 (YQTLGLLGKG…VLDALEMPTY (268 aa)) is the Protein kinase domain. Residues 40-48 (LGKGGFGAT) and Lys-65 contribute to the ATP site. Asp-163 (proton acceptor) is an active-site residue. Positions 319–407 (GAGDEPATGI…GGSVGAGGID (89 aa)) are disordered. The segment covering 343–364 (TRFNTNVQPRDPSSTSLNTGIK) has biased composition (polar residues). 2 Pentapeptide repeat domains span residues 454–493 (QNLV…DFGK) and 504–543 (ANLS…NFSG).

This sequence belongs to the protein kinase superfamily. Ser/Thr protein kinase family. Autophosphorylated.

The enzyme catalyses L-seryl-[protein] + ATP = O-phospho-L-seryl-[protein] + ADP + H(+). It carries out the reaction L-threonyl-[protein] + ATP = O-phospho-L-threonyl-[protein] + ADP + H(+). Protein kinase required for cell motility, but not for phototaxis. The polypeptide is Serine/threonine-protein kinase B (spkB) (Synechocystis sp. (strain ATCC 27184 / PCC 6803 / Kazusa)).